A 1382-amino-acid chain; its full sequence is DNA-directed RNA polymerase subunit beta (1382 aa).

This sequence belongs to the RNA polymerase beta chain family. As to quaternary structure, the RNAP catalytic core consists of 2 alpha, 1 beta, 1 beta' and 1 omega subunit. When a sigma factor is associated with the core the holoenzyme is formed, which can initiate transcription.

It carries out the reaction RNA(n) + a ribonucleoside 5'-triphosphate = RNA(n+1) + diphosphate. DNA-dependent RNA polymerase catalyzes the transcription of DNA into RNA using the four ribonucleoside triphosphates as substrates. The polypeptide is DNA-directed RNA polymerase subunit beta (Paracoccus denitrificans (strain Pd 1222)).